The chain runs to 1171 residues: ATP-dependent helicase/deoxyribonuclease subunit B (1171 aa).

The UvrD-like helicase ATP-binding domain occupies 1–343 (MSLRFVIGRA…LVAEENYRYR (343 aa)). Residue 8–15 (GRAGSGKS) participates in ATP binding. Residues 281-587 (MEQPRFHSPA…QFANIPPSLD (307 aa)) enclose the UvrD-like helicase C-terminal domain. [4Fe-4S] cluster is bound by residues cysteine 805, cysteine 1129, cysteine 1132, and cysteine 1138.

This sequence belongs to the helicase family. AddB/RexB type 1 subfamily. Heterodimer of AddA and AddB. Requires Mg(2+) as cofactor. [4Fe-4S] cluster is required as a cofactor.

The heterodimer acts as both an ATP-dependent DNA helicase and an ATP-dependent, dual-direction single-stranded exonuclease. Recognizes the chi site generating a DNA molecule suitable for the initiation of homologous recombination. The AddB subunit has 5' -&gt; 3' nuclease activity but not helicase activity. The protein is ATP-dependent helicase/deoxyribonuclease subunit B of Bacillus thuringiensis (strain Al Hakam).